The sequence spans 426 residues: MYQAMEVESTSPSGFFLDFYTQSTIPTTDFLNNTNSSHPIRDEKLVKIEIAVLGTCFTLAIINNLCVLLVLLWRRKKVRRMQMFILHLSIADLIVAFFNILPQLIWDITFRFMAGDAMCRFIKYAQMFSLYLSTYILIMTAVDRYRAICHPLSNQTWTPCMVYCKIFIAYAIATIFSIPQAILFQMQEVNEGSGIYDCWVHFEPAWVLTAYALYIFFALYLIPILILFFTYGSICYTIWAKYRHAIKTKKDANTRYPQRRKKKGVILRTHSVHGFSKAKLNSVKLTFAVIVTYIICWSPFFVSQIWWLFDETVVGNAGVVVILLMACLNSCTNPWIYLIFNRNYISNVLPCKCLRRHRVEVAATTETERLSLGSVRRDSRKTSDPKRISESRRISDARRISGKTQKNNSSSPRKTSDQFIYSDKTT.

Over Met1–Ala51 the chain is Extracellular. Asn32 and Asn35 each carry an N-linked (GlcNAc...) asparagine glycan. The helical transmembrane segment at Val52 to Leu72 threads the bilayer. Topologically, residues Trp73 to Phe84 are cytoplasmic. The helical transmembrane segment at Ile85–Ile105 threads the bilayer. At Trp106 to Arg120 the chain is on the extracellular side. Cys119 and Cys198 are disulfide-bonded. A helical transmembrane segment spans residues Phe121 to Ala141. Topologically, residues Val142–Lys165 are cytoplasmic. The helical transmembrane segment at Ile166 to Met186 threads the bilayer. The Extracellular portion of the chain corresponds to Gln187–Leu208. A helical transmembrane segment spans residues Thr209–Phe229. At Thr230–Ala288 the chain is on the cytoplasmic side. Residues Val289–Phe309 form a helical membrane-spanning segment. Over Asp310 to Val319 the chain is Extracellular. Residues Val320–Phe340 form a helical membrane-spanning segment. Residues Asn341–Thr426 are Cytoplasmic-facing. Residues Gly373 to Thr426 form a disordered region. The segment covering Val375–Arg399 has biased composition (basic and acidic residues). A compositionally biased stretch (polar residues) spans Gly402–Thr426.

It belongs to the G-protein coupled receptor 1 family. Vasopressin/oxytocin receptor subfamily. Present in various peripheral tissues with highest expression in branchia and vas deferens. Very low expression detected in nervous system.

It is found in the cell membrane. Acts as a receptor for cephalotocin. This chain is Cephalotocin receptor 2, found in Octopus vulgaris (Common octopus).